Consider the following 235-residue polypeptide: Ribosomal RNA large subunit methyltransferase E (235 aa).

S-adenosyl-L-methionine-binding residues include Gly-76, Trp-78, Asp-99, Asp-115, and Asp-139. The active-site Proton acceptor is the Lys-179.

The protein belongs to the class I-like SAM-binding methyltransferase superfamily. RNA methyltransferase RlmE family.

It is found in the cytoplasm. The catalysed reaction is uridine(2552) in 23S rRNA + S-adenosyl-L-methionine = 2'-O-methyluridine(2552) in 23S rRNA + S-adenosyl-L-homocysteine + H(+). Its function is as follows. Specifically methylates the uridine in position 2552 of 23S rRNA at the 2'-O position of the ribose in the fully assembled 50S ribosomal subunit. This is Ribosomal RNA large subunit methyltransferase E from Rhodopseudomonas palustris (strain BisB5).